The primary structure comprises 59 residues: Large ribosomal subunit protein bL33 (59 aa).

Belongs to the bacterial ribosomal protein bL33 family.

This is Large ribosomal subunit protein bL33 from Borrelia turicatae (strain 91E135).